The following is a 212-amino-acid chain: Thymidylate kinase (212 aa).

ATP is bound at residue 11-18 (GPEGAGKT).

Belongs to the thymidylate kinase family.

It carries out the reaction dTMP + ATP = dTDP + ADP. Phosphorylation of dTMP to form dTDP in both de novo and salvage pathways of dTTP synthesis. This chain is Thymidylate kinase, found in Streptococcus pneumoniae (strain ATCC 700669 / Spain 23F-1).